A 427-amino-acid polypeptide reads, in one-letter code: Serine hydroxymethyltransferase (427 aa).

(6S)-5,6,7,8-tetrahydrofolate is bound at residue glycine 120–isoleucine 122. Lysine 226 carries the post-translational modification N6-(pyridoxal phosphate)lysine. Glutamate 243 is a (6S)-5,6,7,8-tetrahydrofolate binding site.

It belongs to the SHMT family. As to quaternary structure, homodimer. Pyridoxal 5'-phosphate is required as a cofactor.

The protein localises to the cytoplasm. It participates in amino-acid biosynthesis; glycine biosynthesis; glycine from L-serine: step 1/1. In terms of biological role, catalyzes the reversible interconversion of serine and glycine with a modified folate serving as the one-carbon carrier. Also exhibits a pteridine-independent aldolase activity toward beta-hydroxyamino acids, producing glycine and aldehydes, via a retro-aldol mechanism. This is Serine hydroxymethyltransferase from Thermococcus gammatolerans (strain DSM 15229 / JCM 11827 / EJ3).